Reading from the N-terminus, the 451-residue chain is Kynureninase (451 aa).

Pyridoxal 5'-phosphate contacts are provided by residues L131, S132, 159–162 (FPSD), S215, D244, H247, and Y269. At K270 the chain carries N6-(pyridoxal phosphate)lysine. W303 and N331 together coordinate pyridoxal 5'-phosphate.

It belongs to the kynureninase family. In terms of assembly, homodimer. Requires pyridoxal 5'-phosphate as cofactor.

It localises to the cytoplasm. It carries out the reaction L-kynurenine + H2O = anthranilate + L-alanine + H(+). The catalysed reaction is 3-hydroxy-L-kynurenine + H2O = 3-hydroxyanthranilate + L-alanine + H(+). It participates in amino-acid degradation; L-kynurenine degradation; L-alanine and anthranilate from L-kynurenine: step 1/1. The protein operates within cofactor biosynthesis; NAD(+) biosynthesis; quinolinate from L-kynurenine: step 2/3. Catalyzes the cleavage of L-kynurenine (L-Kyn) and L-3-hydroxykynurenine (L-3OHKyn) into anthranilic acid (AA) and 3-hydroxyanthranilic acid (3-OHAA), respectively. The chain is Kynureninase from Dictyostelium discoideum (Social amoeba).